The sequence spans 690 residues: Elongation factor G (690 aa).

The tr-type G domain maps to 8-283 (EDYRNFGIMA…AVVAYLPSPL (276 aa)). GTP-binding positions include 17–24 (AHIDAGKT), 81–85 (DTPGH), and 135–138 (NKMD).

It belongs to the TRAFAC class translation factor GTPase superfamily. Classic translation factor GTPase family. EF-G/EF-2 subfamily.

Its subcellular location is the cytoplasm. In terms of biological role, catalyzes the GTP-dependent ribosomal translocation step during translation elongation. During this step, the ribosome changes from the pre-translocational (PRE) to the post-translocational (POST) state as the newly formed A-site-bound peptidyl-tRNA and P-site-bound deacylated tRNA move to the P and E sites, respectively. Catalyzes the coordinated movement of the two tRNA molecules, the mRNA and conformational changes in the ribosome. In Nitrobacter winogradskyi (strain ATCC 25391 / DSM 10237 / CIP 104748 / NCIMB 11846 / Nb-255), this protein is Elongation factor G.